Here is a 279-residue protein sequence, read N- to C-terminus: MAIRKLAPVTPGTRFASYAGFDEITKSTPEKSLLVPIKRTGGRNSTGRVTSRHMGGGHKRFYRIIDFKRNKDNVPAKVAAIEYDPNRSARIALLHYVDGEKRYILAPKNLKVGDRIESGEKVDIKVGNTMPLKNIPIGSDVHNIELKIGKGGQIARSAGAYAVLAAREGNYATLKMPSGEIRKVRIECRATIGVIGNAEHENISLGKAGRSRWLGIRPQTRGMAMNPVDHPMGGGEGKSKSGGGRKHPKSPWGQLAKGLKTRNKKKASTKLIVRGRKAK.

Residues 223 to 279 are disordered; sequence MAMNPVDHPMGGGEGKSKSGGGRKHPKSPWGQLAKGLKTRNKKKASTKLIVRGRKAK. Positions 232–242 are enriched in gly residues; the sequence is MGGGEGKSKSG. Over residues 259–279 the composition is skewed to basic residues; the sequence is LKTRNKKKASTKLIVRGRKAK.

Belongs to the universal ribosomal protein uL2 family. In terms of assembly, part of the 50S ribosomal subunit. Forms a bridge to the 30S subunit in the 70S ribosome.

Functionally, one of the primary rRNA binding proteins. Required for association of the 30S and 50S subunits to form the 70S ribosome, for tRNA binding and peptide bond formation. It has been suggested to have peptidyltransferase activity; this is somewhat controversial. Makes several contacts with the 16S rRNA in the 70S ribosome. The chain is Large ribosomal subunit protein uL2 from Chlorobaculum tepidum (strain ATCC 49652 / DSM 12025 / NBRC 103806 / TLS) (Chlorobium tepidum).